The chain runs to 202 residues: Transmembrane protein 223 (202 aa).

Topologically, residues 1–43 (MAAPWRRWPTGLLAVLRPLLTCRPLQGTTLQRDVLLFEHDRGR) are mitochondrial matrix. The helical transmembrane segment at 44–64 (FFTILGLFCAGQGVFWASMAV) threads the bilayer. Over 65–97 (AAVSRPPVPVQPLDAEVPNRGPFDLRSALWRYG) the chain is Mitochondrial intermembrane. Residues 98–118 (LAVGCGAIGALVLGAGLLFSL) traverse the membrane as a helical segment. The Mitochondrial matrix portion of the chain corresponds to 119-202 (RSVRSVVLRA…DNTVGAYRSL (84 aa)).

It belongs to the TMEM223 family. In terms of assembly, associates with the mitochondrial ribosome.

It is found in the mitochondrion inner membrane. In terms of biological role, mitochondrial ribosome-associated protein involved in the first steps of cytochrome c oxidase complex (complex IV) biogenesis. Stimulates the translation of MT-CO1 mRNA and is a constituent of early MT-CO1 assembly intermediates. This is Transmembrane protein 223 from Homo sapiens (Human).